Reading from the N-terminus, the 299-residue chain is Oxygen-dependent coproporphyrinogen-III oxidase (299 aa).

Serine 92 serves as a coordination point for substrate. Histidine 96 and histidine 106 together coordinate Mn(2+). Histidine 106 functions as the Proton donor in the catalytic mechanism. 108–110 (NVR) is a substrate binding site. Mn(2+)-binding residues include histidine 145 and histidine 175. The segment at 240–275 (YVEFNLVWDRGTLFGLQTGGRTESILMSMPPLVRWE) is important for dimerization. 258–260 (GGR) serves as a coordination point for substrate.

Belongs to the aerobic coproporphyrinogen-III oxidase family. Homodimer. It depends on Mn(2+) as a cofactor.

The protein resides in the cytoplasm. It catalyses the reaction coproporphyrinogen III + O2 + 2 H(+) = protoporphyrinogen IX + 2 CO2 + 2 H2O. Its pathway is porphyrin-containing compound metabolism; protoporphyrin-IX biosynthesis; protoporphyrinogen-IX from coproporphyrinogen-III (O2 route): step 1/1. Its function is as follows. Involved in the heme biosynthesis. Catalyzes the aerobic oxidative decarboxylation of propionate groups of rings A and B of coproporphyrinogen-III to yield the vinyl groups in protoporphyrinogen-IX. This chain is Oxygen-dependent coproporphyrinogen-III oxidase, found in Escherichia coli O17:K52:H18 (strain UMN026 / ExPEC).